Here is a 352-residue protein sequence, read N- to C-terminus: Adenosine deaminase (352 aa).

At Ala2 the chain carries N-acetylalanine. Zn(2+) contacts are provided by His15 and His17. Substrate contacts are provided by His17 and Asp19. Lys54 carries the N6-acetyllysine modification. Gly184 contributes to the substrate binding site. His214 is a binding site for Zn(2+). Glu217 serves as the catalytic Proton donor. At Lys232 the chain carries N6-acetyllysine. Asp295 is a Zn(2+) binding site. Asp296 contacts substrate.

This sequence belongs to the metallo-dependent hydrolases superfamily. Adenosine and AMP deaminases family. Interacts with DPP4 (via extracellular domain). Interacts with PLG (via Kringle 4 domain); the interaction stimulates PLG activation when in complex with DPP4. Zn(2+) serves as cofactor. As to expression, detected in brain and liver (at protein level).

Its subcellular location is the cell membrane. It is found in the cell junction. The protein localises to the cytoplasmic vesicle lumen. It localises to the cytoplasm. The protein resides in the lysosome. It carries out the reaction adenosine + H2O + H(+) = inosine + NH4(+). It catalyses the reaction 2'-deoxyadenosine + H2O + H(+) = 2'-deoxyinosine + NH4(+). The catalysed reaction is cordycepin + H2O + H(+) = 3'-deoxyinosine + NH4(+). Its function is as follows. Catalyzes the hydrolytic deamination of adenosine and 2-deoxyadenosine. Plays an important role in purine metabolism and in adenosine homeostasis. Modulates signaling by extracellular adenosine, and so contributes indirectly to cellular signaling events. Acts as a positive regulator of T-cell coactivation, by binding DPP4. Its interaction with DPP4 regulates lymphocyte-epithelial cell adhesion. Enhances dendritic cell immunogenicity by affecting dendritic cell costimulatory molecule expression and cytokines and chemokines secretion. Enhances CD4+ T-cell differentiation and proliferation. Acts as a positive modulator of adenosine receptors ADORA1 and ADORA2A, by enhancing their ligand affinity via conformational change. Stimulates plasminogen activation. Plays a role in male fertility. Plays a protective role in early postimplantation embryonic development. Also responsible for the deamination of cordycepin (3'-deoxyadenosine), a fungal natural product that shows antitumor, antibacterial, antifungal, antivirus, and immune regulation properties. This chain is Adenosine deaminase (Ada), found in Rattus norvegicus (Rat).